The sequence spans 88 residues: HssA/B-like protein 13 (88 aa).

This sequence belongs to the hssA/B family.

The polypeptide is HssA/B-like protein 13 (hssl13) (Dictyostelium discoideum (Social amoeba)).